We begin with the raw amino-acid sequence, 217 residues long: Large ribosomal subunit protein uL3 (217 aa).

The protein belongs to the universal ribosomal protein uL3 family. Part of the 50S ribosomal subunit. Forms a cluster with proteins L14 and L19.

In terms of biological role, one of the primary rRNA binding proteins, it binds directly near the 3'-end of the 23S rRNA, where it nucleates assembly of the 50S subunit. This Mycobacterium bovis (strain ATCC BAA-935 / AF2122/97) protein is Large ribosomal subunit protein uL3.